The primary structure comprises 117 residues: MDMRVPAQLLGLLLLWLPGARCDIQLTQSPSFLSASVGDRVTITCRASQGISSYLAWYQQKPGKAPKLLIYAASTLQSGVPSRFSGSGSGTEFTLTISSLQPEDFATYYCQQLNSYP.

Positions 1 to 22 (MDMRVPAQLLGLLLLWLPGARC) are cleaved as a signal peptide. The segment at 23 to 45 (DIQLTQSPSFLSASVGDRVTITC) is framework-1. The region spanning 24–117 (IQLTQSPSFL…YYCQQLNSYP (94 aa)) is the Ig-like domain. An intrachain disulfide couples Cys-45 to Cys-110. Residues 46-56 (RASQGISSYLA) form a complementarity-determining-1 region. A framework-2 region spans residues 57–71 (WYQQKPGKAPKLLIY). The complementarity-determining-2 stretch occupies residues 72-78 (AASTLQS). The interval 79 to 110 (GVPSRFSGSGSGTEFTLTISSLQPEDFATYYC) is framework-3. The interval 111 to 117 (QQLNSYP) is complementarity-determining-3.

As to quaternary structure, immunoglobulins are composed of two identical heavy chains and two identical light chains; disulfide-linked.

It localises to the secreted. It is found in the cell membrane. In terms of biological role, v region of the variable domain of immunoglobulin light chains that participates in the antigen recognition. Immunoglobulins, also known as antibodies, are membrane-bound or secreted glycoproteins produced by B lymphocytes. In the recognition phase of humoral immunity, the membrane-bound immunoglobulins serve as receptors which, upon binding of a specific antigen, trigger the clonal expansion and differentiation of B lymphocytes into immunoglobulins-secreting plasma cells. Secreted immunoglobulins mediate the effector phase of humoral immunity, which results in the elimination of bound antigens. The antigen binding site is formed by the variable domain of one heavy chain, together with that of its associated light chain. Thus, each immunoglobulin has two antigen binding sites with remarkable affinity for a particular antigen. The variable domains are assembled by a process called V-(D)-J rearrangement and can then be subjected to somatic hypermutations which, after exposure to antigen and selection, allow affinity maturation for a particular antigen. This is Immunoglobulin kappa variable 1-9 from Homo sapiens (Human).